A 60-amino-acid chain; its full sequence is Large ribosomal subunit protein bL32 (60 aa).

Positions 1–60 are disordered; that stretch reads MAVQQVKKSRSKRDIRRSHDSLTNPTLSTDKSTGELHLRHHVSPNGFYKGRKVVDTKSED. Over residues 7-16 the composition is skewed to basic residues; that stretch reads KKSRSKRDIR. Over residues 22–31 the composition is skewed to polar residues; the sequence is LTNPTLSTDK.

Belongs to the bacterial ribosomal protein bL32 family.

This Francisella tularensis subsp. tularensis (strain SCHU S4 / Schu 4) protein is Large ribosomal subunit protein bL32.